Reading from the N-terminus, the 521-residue chain is Probable tRNA (uracil-O(2)-)-methyltransferase (521 aa).

It belongs to the TRM44 family.

It localises to the cytoplasm. It carries out the reaction uridine(44) in tRNA(Ser) + S-adenosyl-L-methionine = 2'-O-methyluridine(44) in tRNA(Ser) + S-adenosyl-L-homocysteine + H(+). In terms of biological role, probable adenosyl-L-methionine (AdoMet)-dependent tRNA (uracil-O(2)-)-methyltransferase. The chain is Probable tRNA (uracil-O(2)-)-methyltransferase (trmt44) from Drosophila melanogaster (Fruit fly).